The primary structure comprises 194 residues: Glycerol-3-phosphate acyltransferase (194 aa).

Transmembrane regions (helical) follow at residues 2–22 (AFFCFIVLTYFIGAIPSGVWI), 52–72 (LGVAVLIMDVLKGFIPLYIAS), 80–100 (DLVILGLVAILAHTFSCFISF), 112–132 (VFLFLIPVITLILLAIFILVA), 137–157 (YVSLASITAAFLLPIFTFFTH), and 161–181 (YLFALSVIIAVFVIYRHKTNI).

The protein belongs to the PlsY family. In terms of assembly, probably interacts with PlsX.

Its subcellular location is the cell inner membrane. The enzyme catalyses an acyl phosphate + sn-glycerol 3-phosphate = a 1-acyl-sn-glycero-3-phosphate + phosphate. Its pathway is lipid metabolism; phospholipid metabolism. In terms of biological role, catalyzes the transfer of an acyl group from acyl-phosphate (acyl-PO(4)) to glycerol-3-phosphate (G3P) to form lysophosphatidic acid (LPA). This enzyme utilizes acyl-phosphate as fatty acyl donor, but not acyl-CoA or acyl-ACP. This Fusobacterium nucleatum subsp. nucleatum (strain ATCC 25586 / DSM 15643 / BCRC 10681 / CIP 101130 / JCM 8532 / KCTC 2640 / LMG 13131 / VPI 4355) protein is Glycerol-3-phosphate acyltransferase.